Here is a 247-residue protein sequence, read N- to C-terminus: Triosephosphate isomerase (247 aa).

Residues Asn-10 and Lys-12 each contribute to the substrate site. The active-site Electrophile is the His-94. The active-site Proton acceptor is Glu-164.

The protein belongs to the triosephosphate isomerase family. Homodimer.

The enzyme catalyses D-glyceraldehyde 3-phosphate = dihydroxyacetone phosphate. Its pathway is carbohydrate biosynthesis; gluconeogenesis. It participates in carbohydrate degradation; glycolysis; D-glyceraldehyde 3-phosphate from glycerone phosphate: step 1/1. The sequence is that of Triosephosphate isomerase (Tpi) from Culex tarsalis (Encephalitis mosquito).